The primary structure comprises 267 residues: Protein COFACTOR ASSEMBLY OF COMPLEX C SUBUNIT B CCB1, chloroplastic (267 aa).

A chloroplast-targeting transit peptide spans 1-44 (MATKLISPPLSCPWVTSREVIIKGLPRRRREWMVTKRNRVSAVT). Topologically, residues 45 to 84 (AMIVEPLSVVSSSAIQIHQWWEQNPNSLLLMTEATGGYSL) are lumenal. Residues 85-105 (ASYYTSLGLFVISVPGLWSLI) form a helical membrane-spanning segment. Residues 106–164 (KRSVKSKIVRKTFVVNDVKKEPKQVAGEILSFFTRKNFNITDRGETITFEGKMVPSRGQ) are Stromal-facing. Residues 165 to 185 (AALLTFCTCISLASVGLVLTI) form a helical membrane-spanning segment. Thr186 is a topological domain (lumenal). Residues 187–207 (VPDFGNNWFFIILLSPLAGVY) traverse the membrane as a helical segment. Over 208–267 (YWKKASRKEEIKVKMMVGSKGRLDEIVVQGDDVQVEEMRKELQLNEKGMVYVKGLFERSS) the chain is Stromal.

It localises to the plastid. It is found in the chloroplast thylakoid membrane. Functionally, required for the biogenesis and accumulation of native cytochrome b6 in the thylakoid membrane. Controls the conversion of apocytochrome b6 to holocytochrome b6. Required for covalent binding of the c-type heme to cytochrome b6. The polypeptide is Protein COFACTOR ASSEMBLY OF COMPLEX C SUBUNIT B CCB1, chloroplastic (Arabidopsis thaliana (Mouse-ear cress)).